The primary structure comprises 296 residues: Protein FAM221A (296 aa).

The segment at 235–263 (MQPPSTSSPQPLAVGPSTQISSLRKPEED) is disordered. The span at 237 to 256 (PPSTSSPQPLAVGPSTQISS) shows a compositional bias: polar residues.

It belongs to the FAM221 family.

This Rattus norvegicus (Rat) protein is Protein FAM221A (Fam221a).